Consider the following 985-residue polypeptide: Disease resistance protein At4g27190 (985 aa).

Residues 24–88 (ANAIKFKSNV…ISKARLKLEE (65 aa)) adopt a coiled-coil conformation. Residues 167 to 429 (IGVWGMGGVG…MAEGFMEELG (263 aa)) enclose the NB-ARC domain. 171–178 (GMGGVGKT) is an ATP binding site. LRR repeat units follow at residues 502–523 (SLRR…VEEF), 526–547 (KTSV…GFLQ), 551–572 (TLRI…SLLR), 575–597 (SLHS…ETLA), 598–620 (KLEL…EELK), and 621–643 (RFRH…VVSR).

Belongs to the disease resistance NB-LRR family.

Functionally, disease resistance protein. The protein is Disease resistance protein At4g27190 of Arabidopsis thaliana (Mouse-ear cress).